Here is a 1357-residue protein sequence, read N- to C-terminus: DNA-directed RNA polymerase subunit beta (1357 aa).

Belongs to the RNA polymerase beta chain family. As to quaternary structure, the RNAP catalytic core consists of 2 alpha, 1 beta, 1 beta' and 1 omega subunit. When a sigma factor is associated with the core the holoenzyme is formed, which can initiate transcription.

It catalyses the reaction RNA(n) + a ribonucleoside 5'-triphosphate = RNA(n+1) + diphosphate. Functionally, DNA-dependent RNA polymerase catalyzes the transcription of DNA into RNA using the four ribonucleoside triphosphates as substrates. The protein is DNA-directed RNA polymerase subunit beta of Ectopseudomonas mendocina (strain ymp) (Pseudomonas mendocina).